The chain runs to 122 residues: uncharacterized protein (122 aa).

A disordered region spans residues 97–122 (TSRNGFSNPNKDGKKNDDDNNSSSKS).

This is an uncharacterized protein from Mycoplasma genitalium (strain ATCC 33530 / DSM 19775 / NCTC 10195 / G37) (Mycoplasmoides genitalium).